A 402-amino-acid chain; its full sequence is Flagellar hook protein FlgE (402 aa).

Belongs to the flagella basal body rod proteins family.

The protein localises to the bacterial flagellum basal body. The sequence is that of Flagellar hook protein FlgE (flgE) from Escherichia coli (strain K12).